The following is a 475-amino-acid chain: 3-isopropylmalate dehydratase large subunit (475 aa).

[4Fe-4S] cluster-binding residues include Cys-353, Cys-414, and Cys-417.

Belongs to the aconitase/IPM isomerase family. LeuC type 1 subfamily. In terms of assembly, heterodimer of LeuC and LeuD. The cofactor is [4Fe-4S] cluster.

The catalysed reaction is (2R,3S)-3-isopropylmalate = (2S)-2-isopropylmalate. Its pathway is amino-acid biosynthesis; L-leucine biosynthesis; L-leucine from 3-methyl-2-oxobutanoate: step 2/4. Functionally, catalyzes the isomerization between 2-isopropylmalate and 3-isopropylmalate, via the formation of 2-isopropylmaleate. The chain is 3-isopropylmalate dehydratase large subunit from Marinomonas sp. (strain MWYL1).